Reading from the N-terminus, the 258-residue chain is Tetratricopeptide repeat protein 33 (258 aa).

TPR repeat units follow at residues 59–92, 93–126, and 127–160; these read SKRL…TPGD, AALY…NPHF, and VEAW…CPAN. Positions 231 to 258 are disordered; it reads SASGSENLSDRKEDKVETNDSKEFIKAR. Basic and acidic residues predominate over residues 238-258; the sequence is LSDRKEDKVETNDSKEFIKAR.

The chain is Tetratricopeptide repeat protein 33 (ttc33) from Xenopus laevis (African clawed frog).